Here is a 720-residue protein sequence, read N- to C-terminus: Phosphatase and actin regulator 4 (720 aa).

Positions 1–48 (MGQPRFSRPVHPAAAAEEVDHPPSDAGMGVDVLESGDTTPPTKRKSKF) are disordered. An RPEL 1 repeat occupies 74–99 (EVLERKISMRKPREELVKRGVLLEDP). Disordered stretches follow at residues 294–417 (SGTG…GLPR), 454–568 (NDGF…DTLA), and 610–648 (RPTA…LSQR). Residues 346 to 368 (TYPPPSPSPPLPTHIPPEPPRMP) are compositionally biased toward pro residues. Residues 393-405 (KDFRSLEVSKRTA) show a composition bias toward basic and acidic residues. Composition is skewed to acidic residues over residues 481 to 494 (DDEE…EEEQ), 521 to 534 (EEQE…DSDS), and 542 to 551 (DDEEDEEEDE). RPEL repeat units lie at residues 601-626 (TTLI…QPKN) and 639-664 (RRLT…RFNE). Residues 626–636 (NEADRQAEKRE) are compositionally biased toward basic and acidic residues. Residues 637-646 (IKRRLTRKLS) are compositionally biased toward basic residues.

It belongs to the phosphatase and actin regulator family. Binds PPP1CA and actin.

It localises to the cytoplasm. Its subcellular location is the cell projection. The protein resides in the lamellipodium. In terms of biological role, regulator of protein phosphatase 1 (PP1) required for neural tube and optic fissure closure, and enteric neural crest cell (ENCCs) migration during development. Acts as an activator of PP1. During neural tube closure, localizes to the ventral neural tube and activates PP1, leading to down-regulate cell proliferation within cranial neural tissue and the neural retina. Also acts as a regulator of migration of enteric neural crest cells (ENCCs) by activating PP1, leading to repression of the integrin signaling through the RHO/ROCK pathway. In Gallus gallus (Chicken), this protein is Phosphatase and actin regulator 4 (PHACTR4).